The chain runs to 26 residues: Hemocyanin subunit 3 (26 aa).

Belongs to the tyrosinase family. Hemocyanin subfamily. Hemolymph.

It localises to the secreted. Its subcellular location is the extracellular space. Functionally, hemocyanins are copper-containing oxygen carriers occurring freely dissolved in the hemolymph of many mollusks and arthropods. The polypeptide is Hemocyanin subunit 3 (Homarus americanus (American lobster)).